The sequence spans 423 residues: Histidine--tRNA ligase (423 aa).

Belongs to the class-II aminoacyl-tRNA synthetase family. Homodimer.

It localises to the cytoplasm. It catalyses the reaction tRNA(His) + L-histidine + ATP = L-histidyl-tRNA(His) + AMP + diphosphate + H(+). This is Histidine--tRNA ligase from Bacillus cytotoxicus (strain DSM 22905 / CIP 110041 / 391-98 / NVH 391-98).